The chain runs to 762 residues: Hyperosmolality-gated Ca2+ permeable channel 2.2 (762 aa).

10 consecutive transmembrane segments (helical) span residues 3–23 (VSAL…LVSL), 90–110 (MVIC…AFVL), 144–164 (LWVH…LLYF), 354–374 (IATL…VTFV), 402–422 (VITG…VPPL), 445–465 (KILY…GSVI), 500–520 (GWAG…NLIA), 557–577 (VIAP…YLIY), 594–614 (QYWP…QVIA), and 615–635 (LGFF…PLIL).

This sequence belongs to the CSC1 (TC 1.A.17) family.

Its subcellular location is the membrane. Functionally, acts as an osmosensitive calcium-permeable cation channel. This chain is Hyperosmolality-gated Ca2+ permeable channel 2.2, found in Arabidopsis thaliana (Mouse-ear cress).